The chain runs to 138 residues: Acidic phospholipase A2 2 (138 aa).

An N-terminal signal peptide occupies residues 1–16 (MRTLWIVAVWLTGVEG). Cystine bridges form between cysteine 42-cysteine 131, cysteine 44-cysteine 60, cysteine 59-cysteine 111, cysteine 65-cysteine 138, cysteine 66-cysteine 104, cysteine 73-cysteine 97, and cysteine 91-cysteine 102. Ca(2+) is bound by residues tyrosine 43, glycine 45, and glycine 47. Residue histidine 63 is part of the active site. Aspartate 64 contributes to the Ca(2+) binding site. Residue aspartate 105 is part of the active site.

In terms of assembly, monomer. Requires Ca(2+) as cofactor. Expressed by the venom gland.

Its subcellular location is the secreted. It catalyses the reaction a 1,2-diacyl-sn-glycero-3-phosphocholine + H2O = a 1-acyl-sn-glycero-3-phosphocholine + a fatty acid + H(+). Snake venom phospholipase that inhibits ADP- and collagen-induced human platelet aggregation. This inhibition is completely inhibited by abolition of catalytic activity in case of collagen as inducer and partially inhibited in case of ADP as inducer. PLA2 catalyzes the calcium-dependent hydrolysis of the 2-acyl groups in 3-sn-phosphoglycerides. The polypeptide is Acidic phospholipase A2 2 (Macrovipera lebetinus (Levantine viper)).